Consider the following 98-residue polypeptide: Cystatin-B (98 aa).

An N-acetylmethionine modification is found at Met-1. The short motif at 46 to 50 is the Secondary area of contact element; sequence QVVAG.

This sequence belongs to the cystatin family. In terms of assembly, able to form dimers stabilized by noncovalent forces.

The protein resides in the cytoplasm. It localises to the nucleus. This is an intracellular thiol proteinase inhibitor. Tightly binding reversible inhibitor of cathepsins L, H and B. The sequence is that of Cystatin-B (CSTB) from Macaca fuscata fuscata (Japanese macaque).